Consider the following 467-residue polypeptide: Fumarate hydratase class II (467 aa).

Substrate-binding positions include 99 to 101 (SGT), 130 to 133 (HPND), 140 to 142 (SSN), and Thr188. His189 (proton donor/acceptor) is an active-site residue. Ser319 is a catalytic residue. Substrate-binding positions include Ser320 and 325–327 (KVN).

Belongs to the class-II fumarase/aspartase family. Fumarase subfamily. In terms of assembly, homotetramer.

Its subcellular location is the cytoplasm. It carries out the reaction (S)-malate = fumarate + H2O. The protein operates within carbohydrate metabolism; tricarboxylic acid cycle; (S)-malate from fumarate: step 1/1. Involved in the TCA cycle. Catalyzes the stereospecific interconversion of fumarate to L-malate. This Thermosynechococcus vestitus (strain NIES-2133 / IAM M-273 / BP-1) protein is Fumarate hydratase class II.